A 153-amino-acid chain; its full sequence is ORM1-like protein 3 (153 aa).

Residues 1 to 17 form an important for ceramide level-sensing region; it reads MNVGTAHSEVNPNTRVM. The Cytoplasmic segment spans residues 1–21; that stretch reads MNVGTAHSEVNPNTRVMNSRG. 2 helical membrane-spanning segments follow: residues 22–42 and 43–63; these read IWLSYVLAIGLLHVVLLSIPF and VSVPVVWTLTNLIHNLGMYIF. Residues 64–94 lie on the Cytoplasmic side of the membrane; the sequence is LHTVKGTPFETPDQGKARLLTHWEQMDYGVQ. The helical transmembrane segment at 95–117 threads the bilayer; it reads FTASRKFLTITPIVLYFLTSFYT. The Extracellular segment spans residues 118-121; it reads KYDQ. A helical membrane pass occupies residues 122-142; the sequence is VHFILNTVSLMTVLIPKLPQL. Pro137 is modified (hydroxyproline). The Cytoplasmic portion of the chain corresponds to 143 to 153; that stretch reads HGVRIFGINKY.

This sequence belongs to the ORM family. Ceramide-sensitive subunit of the serine palmitoyltransferase (SPT) complex, which is also composed of SPTLC1, SPTLC2/3 and SPTSSA/B. When hydroxylated at Pro-137, ubiquitinated via 'Lys-48'-linkage, leading to proteasomal degradation. In endothelial cells, ORMDL3 proteasomal degradation is controlled by the sphingosine 1-phosphate receptor signaling pathway.

The protein resides in the endoplasmic reticulum membrane. Plays an essential role in the homeostatic regulation of sphingolipid de novo biosynthesis by modulating the activity of the serine palmitoyltransferase (SPT) in response to ceramide levels. When complexed to SPT, the binding of ceramides to its N-terminus stabilizes a conformation that block SPT substrate entry, hence preventing SPT catalytic activity. Through this mechanism, maintains ceramide levels at sufficient concentrations for the production of complex sphingolipids, but which prevents the accumulation of ceramides to levels that trigger apoptosis. The polypeptide is ORM1-like protein 3 (Ormdl3) (Mus musculus (Mouse)).